We begin with the raw amino-acid sequence, 353 residues long: O-antigen chain mannosyltransferase RfbU (353 aa).

This sequence belongs to the glycosyltransferase group 1 family. Glycosyltransferase 4 subfamily.

It catalyses the reaction alpha-L-rhamnosyl-(1-&gt;3)-alpha-D-galactosyl-1-diphospho-di-trans,octa-cis-undecaprenol + GDP-alpha-D-mannose = alpha-D-Man-(1-&gt;4)-alpha-L-Rha-(1-&gt;3)-alpha-D-Gal-di-trans,octa-cis-undecaprenyl diphosphate + GDP + H(+). It participates in bacterial outer membrane biogenesis; LPS O-antigen biosynthesis. Functionally, mannosyltransferase involved in the biosynthesis of the repeat unit of the lipopolysaccharide (LPS) O-antigen region. Catalyzes the addition of a mannose to the rhamnosyl-galactosyl-undecaprenyl diphosphate intermediate. The protein is O-antigen chain mannosyltransferase RfbU of Salmonella typhimurium (strain LT2 / SGSC1412 / ATCC 700720).